A 60-amino-acid chain; its full sequence is Potassium channel toxin alpha-KTx 15.9 (60 aa).

Positions 1 to 22 (MKIFLPVLVMLILCSMCLLTEG) are cleaved as a signal peptide. Cystine bridges form between cysteine 30–cysteine 51, cysteine 36–cysteine 56, and cysteine 40–cysteine 58.

The protein belongs to the short scorpion toxin superfamily. Potassium channel inhibitor family. Alpha-KTx 15 subfamily. In terms of tissue distribution, expressed by the venom gland.

Its subcellular location is the secreted. Functionally, blocker of A-type voltage-gated potassium channels of cerebellar granular cells. May also inhibit Kv4/KCND when coexpressed with DPP6 or DPP10. The occlusion of the outer entry of the K(+) conducting pore is partially reversible and affects both open and closed channels. It shares the same target in rat brain than BmTX3 (AC Q8I0L5) and AmmTX3 (AC P60208). Has been shown to weakly inhibit TRPV1 channels. The protein is Potassium channel toxin alpha-KTx 15.9 of Lychas mucronatus (Chinese swimming scorpion).